We begin with the raw amino-acid sequence, 336 residues long: MKSAKKLLSVLCLGIFILTFTACDMVEKTPEAKAKSTIAKVNGEKIQRKDLDESPNMQQVLSQIKTQYGEEFEKTEQGKEVIKEQKKQILENLITEKVLLQKGKELKVIPKDEELNKEADKKVNEIKAVYNNDEKKFEETLKSTGFTKETLKEYLKDQIVIEKVINEVTKDVKVEDKDAQKYYNENQSMFTEKPNTMNVSHILVKTEDEAKKVKKRLDAKEDFAKVAKEVSQDTGSKEKGGLLGDISYSDSNYDPTFMKAAIALKSGEISNPVHTQWGYHIIKINSKKEYPVKKFDSVKEDIKKQLKQEKQQEAYTKKIEEWKKASKIKTYEKNLL.

The first 22 residues, 1 to 22 (MKSAKKLLSVLCLGIFILTFTA), serve as a signal peptide directing secretion. Cys23 carries N-palmitoyl cysteine lipidation. The S-diacylglycerol cysteine moiety is linked to residue Cys23. The PpiC domain maps to 194–286 (PNTMNVSHIL…WGYHIIKINS (93 aa)).

Belongs to the PrsA family.

It localises to the cell membrane. It catalyses the reaction [protein]-peptidylproline (omega=180) = [protein]-peptidylproline (omega=0). Its function is as follows. Plays a major role in protein secretion by helping the post-translocational extracellular folding of several secreted proteins. The polypeptide is Foldase protein PrsA (Clostridium botulinum (strain Langeland / NCTC 10281 / Type F)).